Consider the following 87-residue polypeptide: uncharacterized protein (87 aa).

The next 2 membrane-spanning stretches (helical) occupy residues 10–30 and 43–63; these read VAFTVLAYFTFFAGVFLFSIG and GYYIAVMILVAVGAILTQKVT.

The protein localises to the cell membrane. This is an uncharacterized protein from Bacillus subtilis (strain 168).